The following is a 410-amino-acid chain: Imidazolonepropionase (410 aa).

Fe(3+) contacts are provided by His-71 and His-73. Zn(2+) is bound by residues His-71 and His-73. The 4-imidazolone-5-propanoate site is built by Arg-80, Tyr-143, and His-175. Tyr-143 is a binding site for N-formimidoyl-L-glutamate. His-235 serves as a coordination point for Fe(3+). Zn(2+) is bound at residue His-235. Glu-238 is a binding site for 4-imidazolone-5-propanoate. A Fe(3+)-binding site is contributed by Asp-309. Position 309 (Asp-309) interacts with Zn(2+).

This sequence belongs to the metallo-dependent hydrolases superfamily. HutI family. Zn(2+) is required as a cofactor. The cofactor is Fe(3+).

It localises to the cytoplasm. It catalyses the reaction 4-imidazolone-5-propanoate + H2O = N-formimidoyl-L-glutamate. It participates in amino-acid degradation; L-histidine degradation into L-glutamate; N-formimidoyl-L-glutamate from L-histidine: step 3/3. Catalyzes the hydrolytic cleavage of the carbon-nitrogen bond in imidazolone-5-propanoate to yield N-formimidoyl-L-glutamate. It is the third step in the universal histidine degradation pathway. This Thermoplasma acidophilum (strain ATCC 25905 / DSM 1728 / JCM 9062 / NBRC 15155 / AMRC-C165) protein is Imidazolonepropionase.